The primary structure comprises 325 residues: uncharacterized protein (325 aa).

A disordered region spans residues 1–75 (MSQPPEHPGN…PPPGYPTHLQ (75 aa)). 2 stretches are compositionally biased toward pro residues: residues 24–39 (YPPP…PGYG) and 50–70 (YNAP…PPGY). The next 4 helical transmembrane spans lie at 96-116 (AVTL…VIGA), 153-173 (IVMF…HAGI), 205-225 (LLIV…GLIF), and 273-293 (LVGE…AALI).

It is found in the cell membrane. This is an uncharacterized protein from Mycobacterium tuberculosis (strain CDC 1551 / Oshkosh).